The sequence spans 1984 residues: Spermatogenesis-associated protein 31H1 (1984 aa).

5 disordered regions span residues 448–467 (MGLT…TPGP), 1045–1067 (PMEE…QHSL), 1181–1287 (YRER…SDSK), 1326–1346 (RIGA…KPSQ), and 1439–1984 (QQPR…EATR). Polar residues-rich tracts occupy residues 450 to 463 (LTKS…SPGT), 1058 to 1067 (TRISESQHSL), and 1205 to 1226 (TQAS…QSPA). Residues 1238 to 1247 (SRPDLVEKTK) show a composition bias toward basic and acidic residues. 2 stretches are compositionally biased toward polar residues: residues 1458–1471 (TDSQ…TASV) and 1492–1508 (RNET…TPGT). Basic and acidic residues-rich tracts occupy residues 1532–1558 (DKLT…ERTR) and 1568–1579 (SPSERSQRSSLE). Tandem repeats lie at residues 1593 to 1600 (PSRKNHSS), 1601 to 1608 (PSERSWRS), and 1609 to 1616 (PSQRNHCS). A 27 X 8 AA approximate tandem repeat of P-S-E-R-S-H-H-S region spans residues 1593-1935 (PSRKNHSSPS…CSPSERSRRS (343 aa)). A compositionally biased stretch (low complexity) spans 1599–1610 (SSPSERSWRSPS). A compositionally biased stretch (basic and acidic residues) spans 1620–1630 (RSCHSLSERGL). A compositionally biased stretch (basic residues) spans 1636–1647 (RSHRGPSQRRHH). Tandem repeats lie at residues 1641-1648 (PSQRRHHS), 1649-1656 (PSERSHRS), and 1657-1664 (PSERSHRS). The span at 1648–1667 (SPSERSHRSPSERSHRSSSE) shows a compositional bias: basic and acidic residues. Positions 1668 to 1679 (RRHRSPSQRSHR) are enriched in basic residues. Over residues 1680-1691 (GPSERSHCSPSE) the composition is skewed to basic and acidic residues. Repeat copies occupy residues 1681-1688 (PSERSHCS), 1689-1696 (PSERRHRS), 1697-1704 (PSQRSHRG), 1705-1712 (PSERRHHS), 1713-1720 (PSKRSHRS), 1721-1728 (PARRSHRS), 1729-1736 (PSERSHHS), 1737-1744 (PSERSHHS), 1745-1752 (PSERRHHS), 1753-1760 (PSERSHCS), 1761-1768 (PSERSHCS), 1769-1776 (PSERRHRS), 1777-1784 (PSERRHHS), 1785-1792 (PSEKSHHS), 1793-1800 (PSERSHHS), 1801-1808 (PSERRRHS), 1848-1855 (PSEKSHLS), 1864-1871 (PSERRGHS), and 1880-1887 (PSERSHRS). The span at 1692–1727 (RRHRSPSQRSHRGPSERRHHSPSKRSHRSPARRSHR) shows a compositional bias: basic residues. A compositionally biased stretch (basic and acidic residues) spans 1728–1869 (SPSERSHHSP…SRCSPSERRG (142 aa)). Basic and acidic residues-rich tracts occupy residues 1895–1917 (RTSE…EMRP), 1928–1941 (PSER…KEGL), and 1949–1959 (RPSHSLSRDFK). A run of 2 repeats spans residues 1921–1928 (SGRNHCSP) and 1929–1935 (SERSRRS). Polar residues predominate over residues 1960–1969 (NQTTLLGTTH).

Expressed in sperm (at protein level).

The polypeptide is Spermatogenesis-associated protein 31H1 (Homo sapiens (Human)).